The following is a 55-amino-acid chain: Large ribosomal subunit protein bL33 (55 aa).

The protein belongs to the bacterial ribosomal protein bL33 family.

This Paenarthrobacter aurescens (strain TC1) protein is Large ribosomal subunit protein bL33.